The chain runs to 1081 residues: MEASAGLVAGSYRRNELVRIRHESDGGTKPLKNMNGQICQICGDDVGLAETGDVFVACNECAFPVCRPCYEYERKDGTQCCPQCKTRFRRHRGSPRVEGDEDEDDVDDIENEFNYAQGANKARHQRHGEEFSSSSRHESQPIPLLTHGHTVSGEIRTPDTQSVRTTSGPLGPSDRNAISSPYIDPRQPVPVRIVDPSKDLNSYGLGNVDWKERVEGWKLKQEKNMLQMTGKYHEGKGGEIEGTGSNGEELQMADDTRLPMSRVVPIPSSRLTPYRVVIILRLIILCFFLQYRTTHPVKNAYPLWLTSVICEIWFAFSWLLDQFPKWYPINRETYLDRLAIRYDRDGEPSQLVPVDVFVSTVDPLKEPPLVTANTVLSILSVDYPVDKVACYVSDDGSAMLTFESLSETAEFAKKWVPFCKKFNIEPRAPEFYFAQKIDYLKDKIQPSFVKERRAMKREYEEFKVRINALVAKAQKIPEEGWTMQDGTPWPGNNTRDHPGMIQVFLGHSGGLDTDGNELPRLIYVSREKRPGFQHHKKAGAMNALIRVSAVLTNGAYLLNVDCDHYFNNSKAIKEAMCFMMDPAIGKKCCYVQFPQRFDGIDLHDRYANRNIVFFDINMKGLDGIQGPVYVGTGCCFNRQALYGYDPVLTEEDLEPNIIVKSCCGSRKKGKSSKKYNYEKRRGINRSDSNAPLFNMEDIDEGFEGYDDERSILMSQRSVEKRFGQSPVFIAATFMEQGGIPPTTNPATLLKEAIHVISCGYEDKTEWGKEIGWIYGSVTEDILTGFKMHARGWISIYCNPPRPAFKGSAPINLSDRLNQVLRWALGSIEILLSRHCPIWYGYHGRLRLLERIAYINTIVYPITSIPLIAYCILPAFCLITDRFIIPEISNYASIWFILLFISIAVTGILELRWSGVSIEDWWRNEQFWVIGGTSAHLFAVFQGLLKVLAGIDTNFTVTSKATDEDGDFAELYIFKWTALLIPPTTVLLVNLIGIVAGVSYAVNSGYQSWGPLFGKLFFALWVIAHLYPFLKGLLGRQNRTPTIVIVWSVLLASIFSLLWVRINPFVDANPNANNFNGKGGVF.

Methionine 1 bears the N-acetylmethionine mark. Residues 1–270 are Cytoplasmic-facing; sequence MEASAGLVAG…SRVVPIPSSR (270 aa). 8 residues coordinate Zn(2+): cysteine 39, cysteine 42, cysteine 58, cysteine 61, cysteine 66, cysteine 69, cysteine 81, and cysteine 84. The segment at 39–85 adopts an RING-type; degenerate zinc-finger fold; that stretch reads CQICGDDVGLAETGDVFVACNECAFPVCRPCYEYERKDGTQCCPQCK. Residues 118 to 195 are disordered; that stretch reads GANKARHQRH…RQPVPVRIVD (78 aa). Positions 127-139 are enriched in basic and acidic residues; the sequence is HGEEFSSSSRHES. The span at 158 to 168 shows a compositional bias: polar residues; it reads PDTQSVRTTSG. The helical transmembrane segment at 271 to 291 threads the bilayer; sequence LTPYRVVIILRLIILCFFLQY. Over 292–299 the chain is Extracellular; that stretch reads RTTHPVKN. A helical transmembrane segment spans residues 300 to 320; it reads AYPLWLTSVICEIWFAFSWLL. Over 321-856 the chain is Cytoplasmic; sequence DQFPKWYPIN…LLERIAYINT (536 aa). UDP-alpha-D-glucose contacts are provided by serine 359, lysine 365, glutamate 366, and aspartate 395. Aspartate 395 is an active-site residue. Residues 449-476 are a coiled coil; the sequence is VKERRAMKREYEEFKVRINALVAKAQKI. Lysine 536 is a UDP-alpha-D-glucose binding site. Positions 537 and 561 each coordinate Mn(2+). The active site involves aspartate 780. The helical transmembrane segment at 857–877 threads the bilayer; sequence IVYPITSIPLIAYCILPAFCL. Over 878 to 889 the chain is Extracellular; sequence ITDRFIIPEISN. Residues 890–910 form a helical membrane-spanning segment; it reads YASIWFILLFISIAVTGILEL. The Cytoplasmic segment spans residues 911–925; sequence RWSGVSIEDWWRNEQ. The helical transmembrane segment at 926-946 threads the bilayer; it reads FWVIGGTSAHLFAVFQGLLKV. Residues 947-976 lie on the Extracellular side of the membrane; that stretch reads LAGIDTNFTVTSKATDEDGDFAELYIFKWT. An N-linked (GlcNAc...) asparagine glycan is attached at asparagine 953. Residues 977-997 traverse the membrane as a helical segment; that stretch reads ALLIPPTTVLLVNLIGIVAGV. Topologically, residues 998–1008 are cytoplasmic; it reads SYAVNSGYQSW. The helical transmembrane segment at 1009–1029 threads the bilayer; it reads GPLFGKLFFALWVIAHLYPFL. The Extracellular segment spans residues 1030–1038; sequence KGLLGRQNR. Residues 1039 to 1059 form a helical membrane-spanning segment; sequence TPTIVIVWSVLLASIFSLLWV. The Cytoplasmic portion of the chain corresponds to 1060-1081; sequence RINPFVDANPNANNFNGKGGVF.

This sequence belongs to the glycosyltransferase 2 family. Plant cellulose synthase subfamily. In terms of assembly, interacts with CESA3 and CESA6. Assembly with CESA3 and CESA6 is required for functional complex in primary cell wall cellulose synthesis. Interacts with STL1 and STL2, but not with GOT1. Binds to CSI1. Interacts with PAT24/TIP1. Zn(2+) is required as a cofactor. Mn(2+) serves as cofactor. S-acylated. Expressed in germinating seeds, seedlings, roots, stems, shoots leaves and flowers, but not in mature flowers.

The protein localises to the cell membrane. It carries out the reaction [(1-&gt;4)-beta-D-glucosyl](n) + UDP-alpha-D-glucose = [(1-&gt;4)-beta-D-glucosyl](n+1) + UDP + H(+). Its pathway is glycan metabolism; plant cellulose biosynthesis. In terms of biological role, catalytic subunit of cellulose synthase terminal complexes ('rosettes'), required for beta-1,4-glucan microfibril crystallization, a major mechanism of the cell wall formation. Involved in the primary cell wall formation. Required during embryogenesis for cell elongation, orientation of cell expansion and complex cell wall formations, such as interdigitated pattern of epidermal pavement cells, stomatal guard cells and trichomes. Plays a role in lateral roots formation, but seems not necessary for the development of tip-growing cells such as root hairs. The presence of each protein CESA1 and CESA6 is critical for cell expansion after germination. This is Cellulose synthase A catalytic subunit 1 [UDP-forming] from Arabidopsis thaliana (Mouse-ear cress).